The primary structure comprises 705 residues: Forkhead box protein P1 (705 aa).

The segment covering 1-19 has biased composition (polar residues); it reads MMQESGSETKSNGSAIQNG. The segment at 1 to 41 is disordered; that stretch reads MMQESGSETKSNGSAIQNGSSGGNHLLECGALRDTRSNGEA. S113 is modified (phosphoserine). Disordered stretches follow at residues 267-286 and 291-326; these read HTAE…TSTC and APSK…EHPH. Composition is skewed to polar residues over residues 276–286 and 291–311; these read NHSSLDLTSTC and APSK…QLSV. A compositionally biased stretch (basic and acidic residues) spans 314 to 326; sequence PKRESLSHEEHPH. Residue K315 forms a Glycyl lysine isopeptide (Lys-Gly) (interchain with G-Cter in SUMO2) linkage. A C2H2-type zinc finger spans residues 334-359; sequence GVCKWPGCEAVCDDFPAFLKHLNSEH. The leucine-zipper stretch occupies residues 376–397; it reads VQQLELQLAKDKERLQAMMTHL. Residues K400 and K405 each participate in a glycyl lysine isopeptide (Lys-Gly) (interchain with G-Cter in SUMO2) cross-link. Residues 410-414 form a CTBP1-binding region; it reads PLNLV. A compositionally biased stretch (polar residues) spans 418–431; sequence TLSKSASEASPQSL. The segment at 418 to 450 is disordered; it reads TLSKSASEASPQSLPHTPTTPTAPLTPVTQGPS. Low complexity predominate over residues 432–446; the sequence is PHTPTTPTAPLTPVT. K470 participates in a covalent cross-link: Glycyl lysine isopeptide (Lys-Gly) (interchain with G-Cter in SUMO2). The segment at residues 493 to 583 is a DNA-binding region (fork-head); sequence RPPFTYASLI…PQKISGNPSL (91 aa). The interval 639 to 705 is disordered; that stretch reads EHTNSNESDS…EDEPVNEDME (67 aa). Residues 640–651 show a composition bias toward polar residues; it reads HTNSNESDSSPG. A Phosphothreonine modification is found at T681. S686 carries the post-translational modification Phosphoserine. The segment covering 695–705 has biased composition (acidic residues); that stretch reads YEDEPVNEDME.

In terms of assembly, forms homodimers and heterodimers with FOXP2 and FOXP4. Dimerization is required for DNA-binding. Self-associates. Interacts with CTBP1. Interacts with NCOR2 and AR. Interacts with FOXP2. Interacts with TBR1. Interacts with AURKA; this interaction facilitates the phosphorylation of FOXP1, which suppresses the expression of FBXL7. Interacts with ZMYM2. In terms of tissue distribution, isoform 5 is specifically expressed in embryonic stem cells. Highest expression in the lung, brain, and spleen. Lower expression in heart, skeletal muscle, kidney, small intestine (isoform 3 not present) and liver.

The protein localises to the nucleus. In terms of biological role, transcriptional repressor. Can act with CTBP1 to synergistically repress transcription but CTPBP1 is not essential. Plays an important role in the specification and differentiation of lung epithelium. Acts cooperatively with FOXP4 to regulate lung secretory epithelial cell fate and regeneration by restricting the goblet cell lineage program; the function may involve regulation of AGR2. Essential transcriptional regulator of B-cell development. Involved in regulation of cardiac muscle cell proliferation. Involved in the columnar organization of spinal motor neurons. Promotes the formation of the lateral motor neuron column (LMC) and the preganglionic motor column (PGC) and is required for respective appropriate motor axon projections. The segment-appropriate generation of spinal cord motor columns requires cooperation with other Hox proteins. Can regulate PITX3 promoter activity; may promote midbrain identity in embryonic stem cell-derived dopamine neurons by regulating PITX3. Negatively regulates the differentiation of T follicular helper cells T(FH)s. Involved in maintenance of hair follicle stem cell quiescence; the function probably involves regulation of FGF18. Represses transcription of various pro-apoptotic genes and cooperates with NF-kappa B-signaling in promoting B-cell expansion by inhibition of caspase-dependent apoptosis. Binds to CSF1R promoter elements and is involved in regulation of monocyte differentiation and macrophage functions; repression of CSF1R in monocytes seems to involve NCOR2 as corepressor. Involved in endothelial cell proliferation, tube formation and migration indicative for a role in angiogenesis; the role in neovascularization seems to implicate suppression of SEMA5B. Can negatively regulate androgen receptor signaling. Acts as a transcriptional activator of the FBXL7 promoter; this activity is regulated by AURKA. Involved in transcriptional regulation in embryonic stem cells (ESCs). Stimulates expression of transcription factors that are required for pluripotency and decreases expression of differentiation-associated genes. Has distinct DNA-binding specifities as compared to the canonical form and preferentially binds DNA with the sequence 5'-CGATACAA-3' (or closely related sequences). Promotes ESC self-renewal and pluripotency. The sequence is that of Forkhead box protein P1 (Foxp1) from Mus musculus (Mouse).